A 465-amino-acid chain; its full sequence is Argininosuccinate lyase (465 aa).

Belongs to the lyase 1 family. Argininosuccinate lyase subfamily.

Its subcellular location is the cytoplasm. It carries out the reaction 2-(N(omega)-L-arginino)succinate = fumarate + L-arginine. It functions in the pathway amino-acid biosynthesis; L-arginine biosynthesis; L-arginine from L-ornithine and carbamoyl phosphate: step 3/3. The chain is Argininosuccinate lyase from Rhodopseudomonas palustris (strain BisB18).